The primary structure comprises 304 residues: Ribonuclease Z (304 aa).

His-63, His-65, Asp-67, His-68, His-143, Asp-213, and His-271 together coordinate Zn(2+). The active-site Proton acceptor is the Asp-67.

It belongs to the RNase Z family. As to quaternary structure, homodimer. Zn(2+) is required as a cofactor.

The enzyme catalyses Endonucleolytic cleavage of RNA, removing extra 3' nucleotides from tRNA precursor, generating 3' termini of tRNAs. A 3'-hydroxy group is left at the tRNA terminus and a 5'-phosphoryl group is left at the trailer molecule.. Zinc phosphodiesterase, which displays some tRNA 3'-processing endonuclease activity. Probably involved in tRNA maturation, by removing a 3'-trailer from precursor tRNA. This Porphyromonas gingivalis (strain ATCC BAA-308 / W83) protein is Ribonuclease Z.